The primary structure comprises 332 residues: MMKKPVVIELAVVVLAAVVAGGYWWYQSRQDNGLTLYGNVDIRTVNLSFRVGGRVESLAVDEGDAIKAGQVLGELDHKPYEIALMQAKAGVSVAQAQYDLMLAGYRDEEIAQAAAAVKQAQAAYDYAQNFYNRQQGLWKSRTISANDLENARSSRDQAQATLKSAQDKLRQYRSGNREQDIAQAKASLEQAQAQLAQAELNLQDSTLIAPSDGTLLTRAVEPGTVLNEGGTVFTVSLTRPVWVRAYVDERYLDQAQPGRKVLLYTDGRPDKPYHGQIGFVSPTAEFTPKTVETPDLRTDLVYRLRIVVTDADDALRQGMPVTVQFGNEAGHE.

An N-terminal signal peptide occupies residues 1-26 (MMKKPVVIELAVVVLAAVVAGGYWWY). The stretch at 108–209 (EEIAQAAAAV…LNLQDSTLIA (102 aa)) forms a coiled coil.

Belongs to the UPF0194 family.

Its subcellular location is the periplasm. In Shigella sonnei (strain Ss046), this protein is UPF0194 membrane protein YbhG (ybhG).